Reading from the N-terminus, the 303-residue chain is tRNA dimethylallyltransferase (303 aa).

An ATP-binding site is contributed by 9 to 16 (GPTAVGKT). 11-16 (TAVGKT) provides a ligand contact to substrate. An interaction with substrate tRNA region spans residues 34-37 (DSRQ).

The protein belongs to the IPP transferase family. As to quaternary structure, monomer. Mg(2+) serves as cofactor.

The enzyme catalyses adenosine(37) in tRNA + dimethylallyl diphosphate = N(6)-dimethylallyladenosine(37) in tRNA + diphosphate. Its function is as follows. Catalyzes the transfer of a dimethylallyl group onto the adenine at position 37 in tRNAs that read codons beginning with uridine, leading to the formation of N6-(dimethylallyl)adenosine (i(6)A). This chain is tRNA dimethylallyltransferase, found in Petrotoga mobilis (strain DSM 10674 / SJ95).